We begin with the raw amino-acid sequence, 160 residues long: UPF0178 protein PA5247 (160 aa).

This sequence belongs to the UPF0178 family.

The polypeptide is UPF0178 protein PA5247 (Pseudomonas aeruginosa (strain ATCC 15692 / DSM 22644 / CIP 104116 / JCM 14847 / LMG 12228 / 1C / PRS 101 / PAO1)).